The chain runs to 173 residues: ATP-dependent protease subunit HslV (173 aa).

The active site involves Thr2. Positions 158, 161, and 164 each coordinate Na(+).

Belongs to the peptidase T1B family. HslV subfamily. In terms of assembly, a double ring-shaped homohexamer of HslV is capped on each side by a ring-shaped HslU homohexamer. The assembly of the HslU/HslV complex is dependent on binding of ATP.

Its subcellular location is the cytoplasm. The enzyme catalyses ATP-dependent cleavage of peptide bonds with broad specificity.. Allosterically activated by HslU binding. Functionally, protease subunit of a proteasome-like degradation complex believed to be a general protein degrading machinery. The sequence is that of ATP-dependent protease subunit HslV from Haemophilus ducreyi (strain 35000HP / ATCC 700724).